A 503-amino-acid polypeptide reads, in one-letter code: Probable cytosol aminopeptidase (503 aa).

Mn(2+)-binding residues include lysine 270 and aspartate 275. The active site involves lysine 282. Mn(2+) contacts are provided by aspartate 293, aspartate 352, and glutamate 354. Residue arginine 356 is part of the active site.

The protein belongs to the peptidase M17 family. Mn(2+) serves as cofactor.

The protein localises to the cytoplasm. It catalyses the reaction Release of an N-terminal amino acid, Xaa-|-Yaa-, in which Xaa is preferably Leu, but may be other amino acids including Pro although not Arg or Lys, and Yaa may be Pro. Amino acid amides and methyl esters are also readily hydrolyzed, but rates on arylamides are exceedingly low.. The catalysed reaction is Release of an N-terminal amino acid, preferentially leucine, but not glutamic or aspartic acids.. In terms of biological role, presumably involved in the processing and regular turnover of intracellular proteins. Catalyzes the removal of unsubstituted N-terminal amino acids from various peptides. The chain is Probable cytosol aminopeptidase from Enterobacter sp. (strain 638).